A 163-amino-acid polypeptide reads, in one-letter code: MRSQDPSRRLSRRLWTLFALALCLVTGTVALAQTVPQLSGRPSPMQNTGADPLPRWIVDDIQKMRNYPDQPPVIPHSIEGYQLSVNTNRCMSCHRRELTEGSGAPMISVTHYMNREGQMLADVSPRRYFCTACHVPQADTRPLVDNTFKDMSELGFKPAGSGQ.

The N-terminal stretch at 1–32 is a signal peptide; it reads MRSQDPSRRLSRRLWTLFALALCLVTGTVALA. Residues His-76, Cys-90, Cys-93, His-94, His-111, Cys-130, Cys-133, and His-134 each contribute to the heme c site.

This sequence belongs to the NapB family. In terms of assembly, component of the periplasmic nitrate reductase NapAB complex composed of NapA and NapB. Post-translationally, binds 2 heme C groups per subunit.

It is found in the periplasm. In terms of biological role, electron transfer subunit of the periplasmic nitrate reductase complex NapAB. Receives electrons from the membrane-anchored tetraheme c-type NapC protein and transfers these to NapA subunit, thus allowing electron flow between membrane and periplasm. Essential for periplasmic nitrate reduction with nitrate as the terminal electron acceptor. In Neorhizobium galegae (Rhizobium galegae), this protein is Periplasmic nitrate reductase, electron transfer subunit.